The sequence spans 333 residues: B3 domain-containing protein At1g32030 (333 aa).

2 stretches are compositionally biased toward polar residues: residues 76 to 99 (VTVR…SLLD) and 134 to 143 (PQNASSSSTL). The interval 76–179 (VTVRNPEQNQ…SEPKKAKTPY (104 aa)) is disordered. The TF-B3 DNA-binding region spans 220-328 (QSRLLMPFNT…ILSFALVLPP (109 aa)).

The protein localises to the nucleus. The sequence is that of B3 domain-containing protein At1g32030 from Arabidopsis thaliana (Mouse-ear cress).